The primary structure comprises 311 residues: HPr kinase/phosphorylase (311 aa).

Catalysis depends on residues histidine 139 and lysine 160. Residue 154–161 (GDSGVGKS) participates in ATP binding. Serine 161 is a Mg(2+) binding site. The Proton acceptor; for phosphorylation activity. Proton donor; for dephosphorylation activity role is filled by aspartate 178. The interval 202–211 (LEIRGIGIID) is important for the catalytic mechanism of both phosphorylation and dephosphorylation. Residue glutamate 203 participates in Mg(2+) binding. Arginine 244 is an active-site residue. The interval 265–270 (PVKTGR) is important for the catalytic mechanism of dephosphorylation.

This sequence belongs to the HPrK/P family. Homohexamer. Mg(2+) is required as a cofactor.

It catalyses the reaction [HPr protein]-L-serine + ATP = [HPr protein]-O-phospho-L-serine + ADP + H(+). It carries out the reaction [HPr protein]-O-phospho-L-serine + phosphate + H(+) = [HPr protein]-L-serine + diphosphate. Catalyzes the ATP- as well as the pyrophosphate-dependent phosphorylation of a specific serine residue in HPr, a phosphocarrier protein of the phosphoenolpyruvate-dependent sugar phosphotransferase system (PTS). HprK/P also catalyzes the pyrophosphate-producing, inorganic phosphate-dependent dephosphorylation (phosphorolysis) of seryl-phosphorylated HPr (P-Ser-HPr). The two antagonistic activities of HprK/P are regulated by several intracellular metabolites, which change their concentration in response to the absence or presence of rapidly metabolisable carbon sources (glucose, fructose, etc.) in the growth medium. Therefore, by controlling the phosphorylation state of HPr, HPrK/P is a sensor enzyme that plays a major role in the regulation of carbon metabolism and sugar transport: it mediates carbon catabolite repression (CCR), and regulates PTS-catalyzed carbohydrate uptake and inducer exclusion. This Levilactobacillus brevis (strain ATCC 367 / BCRC 12310 / CIP 105137 / JCM 1170 / LMG 11437 / NCIMB 947 / NCTC 947) (Lactobacillus brevis) protein is HPr kinase/phosphorylase.